Consider the following 70-residue polypeptide: Probable U6 snRNA-associated Sm-like protein (70 aa).

One can recognise a Sm domain in the interval 3 to 70; the sequence is DPFCFLKMYL…ILFVGPRLLL (68 aa).

The protein belongs to the snRNP Sm proteins family.

Its subcellular location is the nucleus. Binds specifically to the 3'-terminal U-tract of U6 snRNA. This is Probable U6 snRNA-associated Sm-like protein from Encephalitozoon cuniculi (strain GB-M1) (Microsporidian parasite).